The following is a 284-amino-acid chain: MSNEISRNWPAPAKLNLFLHINGRRADGYHELQTLFQFIDCCDQLDFRVTQTPELILHSNMSAVVADSDNLILRAAKSLQQATSYPGGAEIWLEKRLPMGGGLGGGSSDAATTLVALNQLWNTQLSNDELAAIGLKLGADIPVFIRGFAAFAEGVGERLQAVTPTEFWYLVIAPDAHVSTAAVFQDPLLPRNTPKLGIDTLMSQPWANDCQDLVVSKYPQVAKALGWLLEYAPSRMTGTGACVFGEFSSQQQALAALAKLPSDMQGFVAKGMNISPLIVRLTHP.

Residue Lys14 is part of the active site. 98–108 lines the ATP pocket; it reads PMGGGLGGGSS. Residue Asp140 is part of the active site.

It belongs to the GHMP kinase family. IspE subfamily.

It catalyses the reaction 4-CDP-2-C-methyl-D-erythritol + ATP = 4-CDP-2-C-methyl-D-erythritol 2-phosphate + ADP + H(+). Its pathway is isoprenoid biosynthesis; isopentenyl diphosphate biosynthesis via DXP pathway; isopentenyl diphosphate from 1-deoxy-D-xylulose 5-phosphate: step 3/6. In terms of biological role, catalyzes the phosphorylation of the position 2 hydroxy group of 4-diphosphocytidyl-2C-methyl-D-erythritol. The chain is 4-diphosphocytidyl-2-C-methyl-D-erythritol kinase from Shewanella sp. (strain ANA-3).